The sequence spans 483 residues: MSSATASNTFFLHSCFLLFCLLSAPSCVSMFSGIETGDLEKRDDLFPQILRDEAVARLYELGKVSDASGYLERTFLSPASMRAINLIRKWMEDAGLRTWVDQMGNVHGRVDGANANAEALLIGSHMDTVVDAGMFDGSLGIVSAISALKAMHVNGKLQKLKRPVEVIAFSDEEGVRFQTTFLGSGAIAGILPGTTLEISDKREVMIKDFLKENSIDITEESLLKLKYDPKSVWGYVEVHIEQGPVLEQVGFPLGVVKGIAGQTRLKVTVRGSQGHAGTVPMSMRQDPMAAAAEQIVVLESLCKHPEEYLSYDGHCSDSTVKSLSTSLVCTVGEISTWPSASNVIPGQVTYTVDIRAIDDLGREAVIYDLSKQIYQICDKRSVSCIIEHKHDAGAVICDSDLSSQLKSAAYSALKKMEGDIQDEVPTLMSGAGHDAMAISHLTKVGMLFVRCRGGISHSPQEHVLDNDVWAASLATLSFLENLS.

An N-terminal signal peptide occupies residues 1 to 30; it reads MSSATASNTFFLHSCFLLFCLLSAPSCVSM. His125, Asp136, Glu173, His239, and His457 together coordinate Mn(2+).

The protein belongs to the peptidase M20A family. As to quaternary structure, homodimer. Mn(2+) is required as a cofactor. As to expression, expressed in stems and leaves, and at low levels in roots. Not detected in nodules.

The protein resides in the endoplasmic reticulum. The catalysed reaction is allantoate + H2O + 2 H(+) = (S)-2-ureidoglycine + NH4(+) + CO2. Its function is as follows. Involved in the catabolism of purine nucleotides. Can use allantoate as substrate. The sequential activity of AAH, UGLYAH and UAH allows a complete purine breakdown without the intermediate generation of urea. This chain is Allantoate deiminase 2, found in Glycine max (Soybean).